A 451-amino-acid chain; its full sequence is Zinc metalloproteinase nas-16 (451 aa).

The Peptidase M12A domain occupies 70 to 273 (QVVTKLFSPQ…LTINTAYNCK (204 aa)). 4 cysteine pairs are disulfide-bonded: Cys127–Cys272, Cys148–Cys167, Cys274–Cys291, and Cys296–Cys305. Asn133 carries N-linked (GlcNAc...) asparagine glycosylation. A Zn(2+)-binding site is contributed by His175. Glu176 is a catalytic residue. Zn(2+) is bound by residues His179 and His185. Residues 267-306 (NTAYNCKCPSELLCANGGYTNPSNCLECICPLGYGGVLCD) enclose the EGF-like domain. Residues Asn363 and Asn438 are each glycosylated (N-linked (GlcNAc...) asparagine).

Zn(2+) serves as cofactor.

It is found in the secreted. Metalloprotease. The protein is Zinc metalloproteinase nas-16 (nas-16) of Caenorhabditis elegans.